The sequence spans 162 residues: MLDNAIPQGFEDAVELRRKNRETVVKYMNTKGQDRLRRHELFVEDGCGGLWTTDTGSPIVIRGKDKLAEHAVWSLKCFPDWEWYNIKVFETDDPNHFWVECDGHGKILFPGYPEGYYENHFLHSFELDDGKIKRNREFMNVFQQLRALSIPVPQIKREGIPT.

T91 carries the post-translational modification Phosphothreonine.

It belongs to the PhzA/PhzB family.

Functionally, involved in the biosynthesis of the antibiotic phenazine, a nitrogen-containing heterocyclic molecule having important roles in virulence, competition and biological control. This is Phenazine biosynthesis protein PhzB 2 (phzB2) from Pseudomonas aeruginosa (strain UCBPP-PA14).